The following is an 808-amino-acid chain: Probable inorganic carbon transporter subunit DabA (808 aa).

Zn(2+) is bound by residues C334, D336, H494, and C509.

This sequence belongs to the inorganic carbon transporter (TC 9.A.2) DabA family. In terms of assembly, forms a complex with DabB. It depends on Zn(2+) as a cofactor.

The protein localises to the cell inner membrane. In terms of biological role, part of an energy-coupled inorganic carbon pump. The sequence is that of Probable inorganic carbon transporter subunit DabA from Allorhizobium ampelinum (strain ATCC BAA-846 / DSM 112012 / S4) (Agrobacterium vitis (strain S4)).